A 359-amino-acid chain; its full sequence is tRNA-specific 2-thiouridylase MnmA (359 aa).

ATP-binding positions include Gly9 to Ser16 and Met35. Residue Cys104 is the Nucleophile of the active site. A disulfide bridge links Cys104 with Cys200. Gly128 is an ATP binding site. The tract at residues Lys150–Gln152 is interaction with tRNA. The active-site Cysteine persulfide intermediate is Cys200. Residues Arg306–Tyr307 are interaction with tRNA.

The protein belongs to the MnmA/TRMU family.

The protein resides in the cytoplasm. The catalysed reaction is S-sulfanyl-L-cysteinyl-[protein] + uridine(34) in tRNA + AH2 + ATP = 2-thiouridine(34) in tRNA + L-cysteinyl-[protein] + A + AMP + diphosphate + H(+). In terms of biological role, catalyzes the 2-thiolation of uridine at the wobble position (U34) of tRNA, leading to the formation of s(2)U34. The sequence is that of tRNA-specific 2-thiouridylase MnmA from Clostridium perfringens (strain ATCC 13124 / DSM 756 / JCM 1290 / NCIMB 6125 / NCTC 8237 / Type A).